We begin with the raw amino-acid sequence, 488 residues long: Bifunctional pantoate ligase/cytidylate kinase (488 aa).

ATP is bound at residue 1 to 8; the sequence is MGALHRAH. Positions 1-251 are pantoate--beta-alanine ligase; the sequence is MGALHRAHGQ…CGETRLIDHT (251 aa). His8 (proton donor) is an active-site residue. Gln36 contacts (R)-pantoate. Gln36 is a beta-alanine binding site. 125-128 provides a ligand contact to ATP; that stretch reads GEKD. A (R)-pantoate-binding site is contributed by Gln131. ATP contacts are provided by residues Val154 and 162–165; that span reads CSSR. A cytidylate kinase region spans residues 252-488; that stretch reads FLMSRQPIVA…PEEVWPTPGS (237 aa).

This sequence in the N-terminal section; belongs to the pantothenate synthetase family. It in the C-terminal section; belongs to the cytidylate kinase family. Type 1 subfamily.

The protein resides in the cytoplasm. The catalysed reaction is (R)-pantoate + beta-alanine + ATP = (R)-pantothenate + AMP + diphosphate + H(+). It catalyses the reaction CMP + ATP = CDP + ADP. The enzyme catalyses dCMP + ATP = dCDP + ADP. It functions in the pathway cofactor biosynthesis; (R)-pantothenate biosynthesis; (R)-pantothenate from (R)-pantoate and beta-alanine: step 1/1. In terms of biological role, catalyzes the condensation of pantoate with beta-alanine in an ATP-dependent reaction via a pantoyl-adenylate intermediate. Catalyzes the transfer of a phosphate group from ATP to either CMP or dCMP to form CDP or dCDP and ADP, respectively. In Prochlorococcus marinus (strain MIT 9303), this protein is Bifunctional pantoate ligase/cytidylate kinase.